We begin with the raw amino-acid sequence, 123 residues long: Large ribosomal subunit protein uL24 (123 aa).

The protein belongs to the universal ribosomal protein uL24 family. In terms of assembly, part of the 50S ribosomal subunit.

Its function is as follows. One of two assembly initiator proteins, it binds directly to the 5'-end of the 23S rRNA, where it nucleates assembly of the 50S subunit. In terms of biological role, one of the proteins that surrounds the polypeptide exit tunnel on the outside of the subunit. The polypeptide is Large ribosomal subunit protein uL24 (Solibacter usitatus (strain Ellin6076)).